The chain runs to 840 residues: Probable alpha-glucuronidase A (840 aa).

Residues 1-19 (MRSVITTLTLVASVGLAVA) form the signal peptide. N-linked (GlcNAc...) asparagine glycans are attached at residues Asn-222, Asn-310, Asn-465, Asn-527, Asn-576, Asn-682, and Asn-732.

Belongs to the glycosyl hydrolase 67 family.

It localises to the secreted. It carries out the reaction an alpha-D-glucuronoside + H2O = D-glucuronate + an alcohol. Its function is as follows. Alpha-glucuronidase involved in the hydrolysis of xylan, a major structural heterogeneous polysaccharide found in plant biomass representing the second most abundant polysaccharide in the biosphere, after cellulose. Releases 4-O-methylglucuronic acid from xylan. The polypeptide is Probable alpha-glucuronidase A (aguA) (Aspergillus clavatus (strain ATCC 1007 / CBS 513.65 / DSM 816 / NCTC 3887 / NRRL 1 / QM 1276 / 107)).